Here is a 522-residue protein sequence, read N- to C-terminus: Peptide chain release factor 3 (522 aa).

The tr-type G domain occupies 10 to 277 (ASRKTFAIIS…TFVDFAPAPS (268 aa)). GTP-binding positions include 19–26 (SHPDAGKT), 87–91 (DTPGH), and 141–144 (NKMD).

This sequence belongs to the TRAFAC class translation factor GTPase superfamily. Classic translation factor GTPase family. PrfC subfamily.

It localises to the cytoplasm. Increases the formation of ribosomal termination complexes and stimulates activities of RF-1 and RF-2. It binds guanine nucleotides and has strong preference for UGA stop codons. It may interact directly with the ribosome. The stimulation of RF-1 and RF-2 is significantly reduced by GTP and GDP, but not by GMP. This chain is Peptide chain release factor 3, found in Listeria monocytogenes serovar 1/2a (strain ATCC BAA-679 / EGD-e).